Reading from the N-terminus, the 212-residue chain is Large ribosomal subunit protein uL3 (212 aa).

At Gln-153 the chain carries N5-methylglutamine.

The protein belongs to the universal ribosomal protein uL3 family. Part of the 50S ribosomal subunit. Forms a cluster with proteins L14 and L19. Post-translationally, methylated by PrmB.

One of the primary rRNA binding proteins, it binds directly near the 3'-end of the 23S rRNA, where it nucleates assembly of the 50S subunit. This is Large ribosomal subunit protein uL3 from Shewanella pealeana (strain ATCC 700345 / ANG-SQ1).